We begin with the raw amino-acid sequence, 559 residues long: Urocanate hydratase (559 aa).

NAD(+)-binding positions include 53–54 (GG), Gln-131, 177–179 (GMG), Glu-197, Arg-202, 243–244 (NA), 264–268 (QTSAH), 274–275 (YL), and Tyr-323. Residue Cys-411 is part of the active site. Gly-493 provides a ligand contact to NAD(+).

The protein belongs to the urocanase family. Requires NAD(+) as cofactor.

Its subcellular location is the cytoplasm. The catalysed reaction is 4-imidazolone-5-propanoate = trans-urocanate + H2O. It participates in amino-acid degradation; L-histidine degradation into L-glutamate; N-formimidoyl-L-glutamate from L-histidine: step 2/3. Catalyzes the conversion of urocanate to 4-imidazolone-5-propionate. The sequence is that of Urocanate hydratase from Pseudomonas paraeruginosa (strain DSM 24068 / PA7) (Pseudomonas aeruginosa (strain PA7)).